Consider the following 495-residue polypeptide: Alkaline protease 2 (495 aa).

A signal peptide spans 1-16; the sequence is MKGYLSLSILPLLVAA. The propeptide occupies 17–136; it reads SPVVVDSIHN…IEKDSEVHTM (120 aa). In terms of domain architecture, Inhibitor I9 spans 43-136; sequence SYIVVFKKHV…IEKDSEVHTM (94 aa). The region spanning 146–452 is the Peptidase S8 domain; sequence PWGLARISHR…GGSSNYTDII (307 aa). Active-site charge relay system residues include aspartate 182 and histidine 214. N-linked (GlcNAc...) asparagine glycosylation is present at asparagine 284. Serine 380 functions as the Charge relay system in the catalytic mechanism. N-linked (GlcNAc...) asparagine glycosylation is found at asparagine 447 and asparagine 460.

Belongs to the peptidase S8 family.

It catalyses the reaction Hydrolysis of proteins with broad specificity, and of Bz-Arg-OEt &gt; Ac-Tyr-OEt. Does not hydrolyze peptide amides.. Alkaline protease that allows assimilation of proteinaceous substrates. Acts as a significant virulence factor in invasive aspergillosis. Required for regular sporulation. This is Alkaline protease 2 (alp2) from Aspergillus fumigatus (strain CBS 144.89 / FGSC A1163 / CEA10) (Neosartorya fumigata).